The following is a 339-amino-acid chain: 5-dehydro-2-deoxygluconokinase (339 aa).

This sequence belongs to the carbohydrate kinase PfkB family.

It carries out the reaction 5-dehydro-2-deoxy-D-gluconate + ATP = 6-phospho-5-dehydro-2-deoxy-D-gluconate + ADP + H(+). It functions in the pathway polyol metabolism; myo-inositol degradation into acetyl-CoA; acetyl-CoA from myo-inositol: step 5/7. Its function is as follows. Catalyzes the phosphorylation of 5-dehydro-2-deoxy-D-gluconate (2-deoxy-5-keto-D-gluconate or DKG) to 6-phospho-5-dehydro-2-deoxy-D-gluconate (DKGP). The sequence is that of 5-dehydro-2-deoxygluconokinase from Clostridium beijerinckii (strain ATCC 51743 / NCIMB 8052) (Clostridium acetobutylicum).